We begin with the raw amino-acid sequence, 372 residues long: Cytochrome b (372 aa).

A run of 4 helical transmembrane segments spans residues 25–45, 69–90, 105–125, and 170–190; these read FGSMLLTCLAMQTLTGFFLAI, WTMQNLHAIGASMFFICIYIHI, WLSGITLLITLMATAFFGYVL, and FFALHFILPFIIISLTSIHII. Heme b-binding residues include H75 and H89. The heme b site is built by H174 and H188. An a ubiquinone-binding site is contributed by H193. The next 4 helical transmembrane spans lie at 218-238, 280-300, 312-332, and 339-358; these read YKDMLMVTTMITLLFLILSFS, LGGTLALLMSIAILMTTPFTH, LTQILFWTLVATFITLTWTAT, and FIIISQMTSIFYFFFFIMNP.

Belongs to the cytochrome b family. In terms of assembly, the cytochrome bc1 complex contains 3 respiratory subunits (MT-CYB, CYC1 and UQCRFS1), 2 core proteins (UQCRC1 and UQCRC2) and probably 6 low-molecular weight proteins. Heme b is required as a cofactor.

The protein localises to the mitochondrion inner membrane. Functionally, component of the ubiquinol-cytochrome c reductase complex (complex III or cytochrome b-c1 complex) that is part of the mitochondrial respiratory chain. The b-c1 complex mediates electron transfer from ubiquinol to cytochrome c. Contributes to the generation of a proton gradient across the mitochondrial membrane that is then used for ATP synthesis. The protein is Cytochrome b (MT-CYB) of Ophiophagus hannah (King cobra).